We begin with the raw amino-acid sequence, 126 residues long: Protein ApaG (126 aa).

The ApaG domain occupies 2 to 126; the sequence is SQVESPIKIK…FRLAVPGIFQ (125 aa).

This chain is Protein ApaG, found in Shewanella frigidimarina (strain NCIMB 400).